A 1023-amino-acid chain; its full sequence is MSWLRSSPLRQSFSKSGNNSNSNGGGSANDRSRSGAGGGGLSSVIRPFDATECDPKACYDSFCIHWQQAYEIIQRSESHDDVLGVVTHLDHMVTLLLVELHHCNKLSLPGQPTPPAPCLEHLLSENLLDKLYEWGIKTGRYANAVRLEQLKLYEQLVSHSRHQLLVHEPFLRPLLKLLASSQNEIYPPDVEKRLVILLNQLCVVLMQNVHLLDLFFFSTTQTQQSHHASNGGHTNFIIFSLLIPYVHREGSLGHQARDALLLCMALSQKNSNVGTYIATYSSICPVLVTGLGGLYSRLPNQIEIKTVDWYRITTDDVTELPELTLFMNSLEFCNAVVQVAHTMIRQQLLDFLYQGFLVPVLGPAILQTNVESQVSAMAYFDLIVRSITEPGLIQIVIRFLLDEEKFDGQRILDVLVERLNSNDSRLCMVTLSLFDSLLSLNCEDIMLELMLKYLLHCKHVPISHRYKINRVDPYTQAVEYFLNITPDIMKKVNSVLSINNGGLASNGASSAAAGQPAVVATAKTIGANWNHYGLNTTTGETLLANYQAYLLDARNRIVQCKHACDQWNNVYRYQKLSKANFTGAPNVAANGAGSSGQNSLVNPEDVRALKQLDSLQSIGDSSGYESLNVFSQTSNDLVAPGTMPQEPQLKQQQQRIDAWKVSSVREEPIGDLDLSEDLFAQGTVSLGPFLTAIWGKLQTFTSNCLYVNLHLTGLITHLTLFPLPLLHSILLRPDIPTTSDTPSFHQVLKILKQQIDAELPDTDESLEIVDMARSFLVDREFRLVNMRKNAIESAASGKLLNGGGSSMTSSLSQTTPMQLTPSSSYDPFKRQDGKRKSISNSFSNIFRRPGSVGKNPPSFPSRSSNSNGLNHSPNGRQQPQSYTPASMNVPSPVGQQQHQHQSVSSVMPPSGLLIGSSRRESREAETQFMSIDTSSLQAGGINAPSGHVSNGSNGNDLLHPHSLEHGLTSYSVGSERQLNLAIGAVLLDEWLRELSAVTQEQCIMMLSEQVQQQQQQPPARTAS.

3 stretches are compositionally biased toward polar residues: residues 1–13 (MSWL…RQSF), 806–825 (SMTS…SSSY), and 868–888 (GLNH…ASMN). Disordered regions lie at residues 1–39 (MSWL…AGGG) and 797–927 (GKLL…AETQ). The span at 889-906 (VPSPVGQQQHQHQSVSSV) shows a compositional bias: low complexity.

This sequence belongs to the FHIP family.

In Anopheles gambiae (African malaria mosquito), this protein is FHIP family protein AGAP011705.